Consider the following 318-residue polypeptide: Peroxisomal targeting signal 2 receptor (318 aa).

6 WD repeats span residues 60 to 91 (DWNDGLFDVTWSENNEHVLVTCSGDGSLQLWD), 104 to 136 (EHTQEVYSVDWSQTRGEQLVVSGSWDQTVKVWD), 148 to 179 (GHESVIYSTIWSPHIPGCFASASGDQTLRIWD), 191 to 222 (AHQTEILSCDWCKYNENLVVTGAVDCSLRGWD), 235 to 266 (GHTYAIRRVKFSPFHASVLASCSYDFTVRFWN), and 279 to 310 (HHTEFTCGLDLSLQSPTQVADCSWDETIKIYD).

The protein belongs to the WD repeat peroxin-7 family. As to quaternary structure, interacts with PEX5; interaction only takes place when PEX7 is associated with cargo proteins. Interacts with VWA8.

Its subcellular location is the cytoplasm. It is found in the cytosol. The protein localises to the peroxisome matrix. Functionally, receptor required for the peroxisomal import of proteins containing a C-terminal PTS2-type peroxisomal targeting signal. Specifically binds to cargo proteins containing a PTS2 peroxisomal targeting signal in the cytosol. Cargo protein-binding triggers interaction with PEX5 and formation of a ternary complex composed of PEX5 and PEX7 along with PTS2-containing cargo proteins, which is tranlocated into peroxisomes by passing through the PEX13-PEX14 docking complex. The protein is Peroxisomal targeting signal 2 receptor of Mus musculus (Mouse).